The chain runs to 86 residues: Small ribosomal subunit protein bS16 (86 aa).

This sequence belongs to the bacterial ribosomal protein bS16 family.

The protein is Small ribosomal subunit protein bS16 of Carboxydothermus hydrogenoformans (strain ATCC BAA-161 / DSM 6008 / Z-2901).